Reading from the N-terminus, the 255-residue chain is Uridylate kinase (255 aa).

Residue 22-25 (KLSG) coordinates ATP. The interval 30-35 (GNGGYG) is involved in allosteric activation by GTP. G64 lines the UMP pocket. 2 residues coordinate ATP: G65 and R69. UMP is bound by residues D85 and 146 to 153 (TGNPFFTT). ATP contacts are provided by N174, Y180, and D183.

Belongs to the UMP kinase family. As to quaternary structure, homohexamer.

It is found in the cytoplasm. It catalyses the reaction UMP + ATP = UDP + ADP. It participates in pyrimidine metabolism; CTP biosynthesis via de novo pathway; UDP from UMP (UMPK route): step 1/1. With respect to regulation, allosterically activated by GTP. Inhibited by UTP. In terms of biological role, catalyzes the reversible phosphorylation of UMP to UDP. In Rubrobacter xylanophilus (strain DSM 9941 / JCM 11954 / NBRC 16129 / PRD-1), this protein is Uridylate kinase.